Reading from the N-terminus, the 454-residue chain is uncharacterized protein (454 aa).

One can recognise an HNH domain in the interval 364–405 (CSRPGCDAPAYHSEVHHVTPWTTTHRTDINDLTLACGPDNRL).

It belongs to the Rv1128c/1148c/1588c/1702c/1945/3466 family.

This is an uncharacterized protein from Mycobacterium tuberculosis (strain ATCC 25618 / H37Rv).